The sequence spans 214 residues: External core antigen (214 aa).

The N-terminal stretch at 1-19 (MQLFHLCLIISCTCPTVQA) is a signal peptide. Positions 25–27 (GWL) are HBEAG. The interval 165–214 (NAPILSTLPETTVVRRRDRGRSPRRRTPSPRRRRSQSPRRRRSQSRESQC) is disordered. Positions 178–207 (VRRRDRGRSPRRRTPSPRRRRSQSPRRRRS) are enriched in basic residues. A 1; half-length repeat occupies 186–192 (SPRRRTP). The segment at 186-208 (SPRRRTPSPRRRRSQSPRRRRSQ) is 3 X 8 AA repeats of S-P-R-R-R-R-S-Q. Residues 186 to 214 (SPRRRTPSPRRRRSQSPRRRRSQSRESQC) constitute a propeptide that is removed on maturation. A run of 2 repeats spans residues 193–200 (SPRRRRSQ) and 201–208 (SPRRRRSQ).

Belongs to the orthohepadnavirus precore antigen family. As to quaternary structure, homodimerizes. Post-translationally, phosphorylated. Cleaved by host furin.

It is found in the secreted. Its subcellular location is the host nucleus. May regulate immune response to the intracellular capsid in acting as a T-cell tolerogen, by having an immunoregulatory effect which prevents destruction of infected cells by cytotoxic T-cells. This immune regulation may predispose to chronicity during perinatal infections and prevent severe liver injury during adult infections. This Homo sapiens (Human) protein is External core antigen.